Here is a 513-residue protein sequence, read N- to C-terminus: ATP synthase subunit alpha (513 aa).

Gly-169–Thr-176 provides a ligand contact to ATP.

Belongs to the ATPase alpha/beta chains family. F-type ATPases have 2 components, CF(1) - the catalytic core - and CF(0) - the membrane proton channel. CF(1) has five subunits: alpha(3), beta(3), gamma(1), delta(1), epsilon(1). CF(0) has three main subunits: a(1), b(2) and c(9-12). The alpha and beta chains form an alternating ring which encloses part of the gamma chain. CF(1) is attached to CF(0) by a central stalk formed by the gamma and epsilon chains, while a peripheral stalk is formed by the delta and b chains.

It is found in the cell inner membrane. The enzyme catalyses ATP + H2O + 4 H(+)(in) = ADP + phosphate + 5 H(+)(out). Its function is as follows. Produces ATP from ADP in the presence of a proton gradient across the membrane. The alpha chain is a regulatory subunit. In Escherichia coli O81 (strain ED1a), this protein is ATP synthase subunit alpha.